The sequence spans 439 residues: Acyl-coenzyme A thioesterase 9, mitochondrial (439 aa).

The transit peptide at 1-21 (MRRAALRLCALGKGQLTPGRG) directs the protein to the mitochondrion. 2 HotDog ACOT-type domains span residues 84-209 (KDSY…RDSE) and 289-401 (ENSK…EKEV). Residue K103 is modified to N6-acetyllysine.

It belongs to the acyl coenzyme A hydrolase family. In terms of assembly, interacts with NYAP1, NYAP2 and MYO16.

The protein localises to the mitochondrion. It localises to the mitochondrion matrix. Its subcellular location is the mitochondrion inner membrane. The catalysed reaction is butanoyl-CoA + H2O = butanoate + CoA + H(+). It catalyses the reaction propanoyl-CoA + H2O = propanoate + CoA + H(+). It carries out the reaction hexadecanoyl-CoA + H2O = hexadecanoate + CoA + H(+). The enzyme catalyses octanoyl-CoA + H2O = octanoate + CoA + H(+). The catalysed reaction is decanoyl-CoA + H2O = decanoate + CoA + H(+). It catalyses the reaction tetradecanoyl-CoA + H2O = tetradecanoate + CoA + H(+). It carries out the reaction 4,8-dimethylnonanoyl-CoA + H2O = 4,8-dimethylnonanoate + CoA + H(+). The enzyme catalyses 3-methylbutanoyl-CoA + H2O = 3-methylbutanoate + CoA + H(+). The catalysed reaction is 2-methylpropanoyl-CoA + H2O = 2-methylpropanoate + CoA + H(+). The protein operates within lipid metabolism; fatty acid metabolism. Its activity is regulated as follows. Strongly inhibited by NADH and CoA. Mitochondrial acyl-CoA thioesterase. Catalyzes the hydrolysis of acyl-CoAs into free fatty acids and coenzyme A (CoA), regulating their respective intracellular levels. Regulates both mitochondrial lipid and amino acid metabolism. The protein is Acyl-coenzyme A thioesterase 9, mitochondrial of Homo sapiens (Human).